The chain runs to 155 residues: SsrA-binding protein (155 aa).

It belongs to the SmpB family.

It is found in the cytoplasm. In terms of biological role, required for rescue of stalled ribosomes mediated by trans-translation. Binds to transfer-messenger RNA (tmRNA), required for stable association of tmRNA with ribosomes. tmRNA and SmpB together mimic tRNA shape, replacing the anticodon stem-loop with SmpB. tmRNA is encoded by the ssrA gene; the 2 termini fold to resemble tRNA(Ala) and it encodes a 'tag peptide', a short internal open reading frame. During trans-translation Ala-aminoacylated tmRNA acts like a tRNA, entering the A-site of stalled ribosomes, displacing the stalled mRNA. The ribosome then switches to translate the ORF on the tmRNA; the nascent peptide is terminated with the 'tag peptide' encoded by the tmRNA and targeted for degradation. The ribosome is freed to recommence translation, which seems to be the essential function of trans-translation. This chain is SsrA-binding protein, found in Streptococcus pyogenes serotype M4 (strain MGAS10750).